We begin with the raw amino-acid sequence, 366 residues long: Aminomethyltransferase (366 aa).

It belongs to the GcvT family. In terms of assembly, the glycine cleavage system is composed of four proteins: P, T, L and H.

The enzyme catalyses N(6)-[(R)-S(8)-aminomethyldihydrolipoyl]-L-lysyl-[protein] + (6S)-5,6,7,8-tetrahydrofolate = N(6)-[(R)-dihydrolipoyl]-L-lysyl-[protein] + (6R)-5,10-methylene-5,6,7,8-tetrahydrofolate + NH4(+). Functionally, the glycine cleavage system catalyzes the degradation of glycine. This Bordetella parapertussis (strain 12822 / ATCC BAA-587 / NCTC 13253) protein is Aminomethyltransferase.